Here is a 617-residue protein sequence, read N- to C-terminus: Dihydroxy-acid dehydratase (617 aa).

Asp81 contacts Mg(2+). Residue Cys122 coordinates [2Fe-2S] cluster. Positions 123 and 124 each coordinate Mg(2+). An N6-carboxylysine modification is found at Lys124. Residue Cys197 participates in [2Fe-2S] cluster binding. Glu493 is a Mg(2+) binding site. Ser519 serves as the catalytic Proton acceptor.

This sequence belongs to the IlvD/Edd family. In terms of assembly, homodimer. [2Fe-2S] cluster is required as a cofactor. Requires Mg(2+) as cofactor.

The catalysed reaction is (2R)-2,3-dihydroxy-3-methylbutanoate = 3-methyl-2-oxobutanoate + H2O. The enzyme catalyses (2R,3R)-2,3-dihydroxy-3-methylpentanoate = (S)-3-methyl-2-oxopentanoate + H2O. It participates in amino-acid biosynthesis; L-isoleucine biosynthesis; L-isoleucine from 2-oxobutanoate: step 3/4. The protein operates within amino-acid biosynthesis; L-valine biosynthesis; L-valine from pyruvate: step 3/4. In terms of biological role, functions in the biosynthesis of branched-chain amino acids. Catalyzes the dehydration of (2R,3R)-2,3-dihydroxy-3-methylpentanoate (2,3-dihydroxy-3-methylvalerate) into 2-oxo-3-methylpentanoate (2-oxo-3-methylvalerate) and of (2R)-2,3-dihydroxy-3-methylbutanoate (2,3-dihydroxyisovalerate) into 2-oxo-3-methylbutanoate (2-oxoisovalerate), the penultimate precursor to L-isoleucine and L-valine, respectively. The protein is Dihydroxy-acid dehydratase of Corynebacterium aurimucosum (strain ATCC 700975 / DSM 44827 / CIP 107346 / CN-1) (Corynebacterium nigricans).